A 257-amino-acid chain; its full sequence is 3-dehydroquinate dehydratase (257 aa).

3-dehydroquinate contacts are provided by residues 50–52 and Arg86; that span reads EWR. His147 functions as the Proton donor/acceptor in the catalytic mechanism. Lys174 (schiff-base intermediate with substrate) is an active-site residue. Residues Arg216, Ser235, and Gln239 each coordinate 3-dehydroquinate.

The protein belongs to the type-I 3-dehydroquinase family. Homodimer.

It carries out the reaction 3-dehydroquinate = 3-dehydroshikimate + H2O. It functions in the pathway metabolic intermediate biosynthesis; chorismate biosynthesis; chorismate from D-erythrose 4-phosphate and phosphoenolpyruvate: step 3/7. Functionally, involved in the third step of the chorismate pathway, which leads to the biosynthesis of aromatic amino acids. Catalyzes the cis-dehydration of 3-dehydroquinate (DHQ) and introduces the first double bond of the aromatic ring to yield 3-dehydroshikimate. This chain is 3-dehydroquinate dehydratase, found in Geobacillus kaustophilus (strain HTA426).